The chain runs to 502 residues: Glycerol kinase (502 aa).

T12 provides a ligand contact to ADP. 3 residues coordinate ATP: T12, T13, and S14. T12 is a sn-glycerol 3-phosphate binding site. Position 16 (R16) interacts with ADP. Residues R82, E83, Y134, and D243 each coordinate sn-glycerol 3-phosphate. The glycerol site is built by R82, E83, Y134, D243, and Q244. ADP is bound by residues T265 and G308. The ATP site is built by T265, G308, Q312, and G412. Residue G412 participates in ADP binding.

The protein belongs to the FGGY kinase family.

The enzyme catalyses glycerol + ATP = sn-glycerol 3-phosphate + ADP + H(+). It participates in polyol metabolism; glycerol degradation via glycerol kinase pathway; sn-glycerol 3-phosphate from glycerol: step 1/1. With respect to regulation, inhibited by fructose 1,6-bisphosphate (FBP). In terms of biological role, key enzyme in the regulation of glycerol uptake and metabolism. Catalyzes the phosphorylation of glycerol to yield sn-glycerol 3-phosphate. The protein is Glycerol kinase of Methylobacterium nodulans (strain LMG 21967 / CNCM I-2342 / ORS 2060).